A 97-amino-acid polypeptide reads, in one-letter code: Co-chaperonin GroES (97 aa).

It belongs to the GroES chaperonin family. As to quaternary structure, heptamer of 7 subunits arranged in a ring. Interacts with the chaperonin GroEL.

The protein localises to the cytoplasm. Together with the chaperonin GroEL, plays an essential role in assisting protein folding. The GroEL-GroES system forms a nano-cage that allows encapsulation of the non-native substrate proteins and provides a physical environment optimized to promote and accelerate protein folding. GroES binds to the apical surface of the GroEL ring, thereby capping the opening of the GroEL channel. The sequence is that of Co-chaperonin GroES from Pseudomonas aeruginosa (strain LESB58).